The chain runs to 237 residues: Probable transcriptional regulatory protein Fjoh_2560 (237 aa).

This sequence belongs to the TACO1 family.

The protein resides in the cytoplasm. The polypeptide is Probable transcriptional regulatory protein Fjoh_2560 (Flavobacterium johnsoniae (strain ATCC 17061 / DSM 2064 / JCM 8514 / BCRC 14874 / CCUG 350202 / NBRC 14942 / NCIMB 11054 / UW101) (Cytophaga johnsonae)).